We begin with the raw amino-acid sequence, 373 residues long: Alpha-1,3-mannosyl-glycoprotein 4-beta-N-acetylglucosaminyltransferase-like protein MGAT4D (373 aa).

Residues M1–N5 are Cytoplasmic-facing. A helical; Signal-anchor for type II membrane protein membrane pass occupies residues V6–S26. Topologically, residues R27–Y373 are lumenal. Residues N29, N54, and N144 are each glycosylated (N-linked (GlcNAc...) asparagine).

Belongs to the glycosyltransferase 54 family. In terms of assembly, isoform 2 self-associates; specifically in the endoplasmic reticulum prior to its translocation to the Golgi. Isoform 1 and isoform 2 interact with MGAT1, MGAT3 and MAN2A2; isoform 2 interacts specifically with MGAT1 in the Golgi. In terms of processing, isoform 2 is N-glycosylated; consisting of high-mannose and/or hybrid glycans. In terms of tissue distribution, isoform 1 and isoform 2 are specifically expressed in testis. Isoform 2 is expressed in spermatocytes but not in spermatids. Isoform 1 is expressed in spermatids.

Its subcellular location is the endoplasmic reticulum membrane. The protein resides in the endoplasmic reticulum-Golgi intermediate compartment membrane. The protein localises to the golgi apparatus membrane. In terms of biological role, may play a role in male spermatogenesis. In vitro acts as inhibitor of MGAT1 activity causing cell surface proteins to carry mainly high mannose N-glycans. The function is mediated by its lumenal domain and occurs specifically in the Golgi. A catalytic glucosyltransferase activity is not detected. May be involved in regulation of Sertoli-germ cell interactions during specific stages of spermatogenesis. The polypeptide is Alpha-1,3-mannosyl-glycoprotein 4-beta-N-acetylglucosaminyltransferase-like protein MGAT4D (Mus musculus (Mouse)).